The primary structure comprises 424 residues: UDP-N-acetylglucosamine 1-carboxyvinyltransferase (424 aa).

Residue 22–23 (KN) participates in phosphoenolpyruvate binding. A UDP-N-acetyl-alpha-D-glucosamine-binding site is contributed by Arg95. Cys119 serves as the catalytic Proton donor. At Cys119 the chain carries 2-(S-cysteinyl)pyruvic acid O-phosphothioketal. UDP-N-acetyl-alpha-D-glucosamine contacts are provided by residues 124–128 (RPVDQ), Asp311, and Ile333.

This sequence belongs to the EPSP synthase family. MurA subfamily.

It localises to the cytoplasm. It carries out the reaction phosphoenolpyruvate + UDP-N-acetyl-alpha-D-glucosamine = UDP-N-acetyl-3-O-(1-carboxyvinyl)-alpha-D-glucosamine + phosphate. The protein operates within cell wall biogenesis; peptidoglycan biosynthesis. In terms of biological role, cell wall formation. Adds enolpyruvyl to UDP-N-acetylglucosamine. In Polaromonas naphthalenivorans (strain CJ2), this protein is UDP-N-acetylglucosamine 1-carboxyvinyltransferase.